Reading from the N-terminus, the 283-residue chain is Acetylglutamate kinase (283 aa).

Residues glycine 63–glycine 64, arginine 85, and asparagine 178 contribute to the substrate site.

Belongs to the acetylglutamate kinase family. ArgB subfamily.

Its subcellular location is the cytoplasm. It carries out the reaction N-acetyl-L-glutamate + ATP = N-acetyl-L-glutamyl 5-phosphate + ADP. It participates in amino-acid biosynthesis; L-arginine biosynthesis; N(2)-acetyl-L-ornithine from L-glutamate: step 2/4. Its function is as follows. Catalyzes the ATP-dependent phosphorylation of N-acetyl-L-glutamate. The sequence is that of Acetylglutamate kinase from Prochlorococcus marinus (strain MIT 9515).